A 1032-amino-acid polypeptide reads, in one-letter code: Beta-galactosidase (1032 aa).

Positions 100 and 198 each coordinate substrate. Asp-198 provides a ligand contact to Na(+). Positions 413, 415, and 458 each coordinate Mg(2+). Substrate is bound by residues Glu-458 and 534-537 (EYAH). Residue Glu-458 is the Proton donor of the active site. Glu-534 acts as the Nucleophile in catalysis. Asn-594 is a Mg(2+) binding site. Phe-598 and Asn-601 together coordinate Na(+). Substrate is bound by residues Asn-601 and Trp-1006.

This sequence belongs to the glycosyl hydrolase 2 family. In terms of assembly, homotetramer. Requires Mg(2+) as cofactor. The cofactor is Na(+).

It catalyses the reaction Hydrolysis of terminal non-reducing beta-D-galactose residues in beta-D-galactosides.. This chain is Beta-galactosidase, found in Vibrio vulnificus (strain CMCP6).